Consider the following 214-residue polypeptide: Ribonuclease HII (214 aa).

Positions 26-214 constitute an RNase H type-2 domain; sequence EIVCGVDEAG…PVRAALDLIR (189 aa). The a divalent metal cation site is built by D32, E33, and D124.

Belongs to the RNase HII family. It depends on Mn(2+) as a cofactor. Mg(2+) is required as a cofactor.

It is found in the cytoplasm. It carries out the reaction Endonucleolytic cleavage to 5'-phosphomonoester.. In terms of biological role, endonuclease that specifically degrades the RNA of RNA-DNA hybrids. In Burkholderia cenocepacia (strain HI2424), this protein is Ribonuclease HII.